The primary structure comprises 296 residues: 110 kDa antigen (296 aa).

One copy of the 1; approximate repeat lies at 132-143; that stretch reads EETQKTVEPEQI. Residues 132–296 are 13.5 X 12 AA approximate tandem repeats of E-E-T-Q-K-T-V-E-P-E-Q-T; that stretch reads EETQKTVEPE…TQETQNTVEP (165 aa). The segment at 133–296 is disordered; the sequence is ETQKTVEPEQ…TQETQNTVEP (164 aa). One copy of the 2; approximate repeat lies at 144-155; it reads EETQNTVEPEQT. Copy 3 of the repeat occupies 156–167; the sequence is EETQKTVEPEQT. Residues 168 to 179 form a 4; approximate repeat; that stretch reads EETQNTVEPEQI. Residues 180–191 form repeat 5; it reads EETQKTVEPEQT. Over residues 181–271 the composition is skewed to basic and acidic residues; that stretch reads ETQKTVEPEQ…QTEETQKTVE (91 aa). The 6; approximate repeat unit spans residues 192-203; it reads EEAQKTVEPEQT. A run of 6 repeats spans residues 204-215, 216-227, 228-239, 240-251, 252-263, and 264-275. Residues 276-287 form a 13; approximate repeat; sequence EETQNTVEPEPT. Positions 277 to 296 are enriched in polar residues; it reads ETQNTVEPEPTQETQNTVEP. Residues 288-293 form a 14; truncated repeat; sequence QETQNT.

The polypeptide is 110 kDa antigen (Plasmodium knowlesi).